The sequence spans 485 residues: Aspartyl/glutamyl-tRNA(Asn/Gln) amidotransferase subunit B (485 aa).

The protein belongs to the GatB/GatE family. GatB subfamily. As to quaternary structure, heterotrimer of A, B and C subunits.

It carries out the reaction L-glutamyl-tRNA(Gln) + L-glutamine + ATP + H2O = L-glutaminyl-tRNA(Gln) + L-glutamate + ADP + phosphate + H(+). The catalysed reaction is L-aspartyl-tRNA(Asn) + L-glutamine + ATP + H2O = L-asparaginyl-tRNA(Asn) + L-glutamate + ADP + phosphate + 2 H(+). Its function is as follows. Allows the formation of correctly charged Asn-tRNA(Asn) or Gln-tRNA(Gln) through the transamidation of misacylated Asp-tRNA(Asn) or Glu-tRNA(Gln) in organisms which lack either or both of asparaginyl-tRNA or glutaminyl-tRNA synthetases. The reaction takes place in the presence of glutamine and ATP through an activated phospho-Asp-tRNA(Asn) or phospho-Glu-tRNA(Gln). This Bordetella avium (strain 197N) protein is Aspartyl/glutamyl-tRNA(Asn/Gln) amidotransferase subunit B.